The following is a 307-amino-acid chain: Tyrosine recombinase XerC (307 aa).

A Core-binding (CB) domain is found at 6-89; sequence HNTLQTVNTF…TLRTFFRYLM (84 aa). One can recognise a Tyr recombinase domain in the interval 110-293; that stretch reads RLPKALDVDQ…DFQHLAQVYD (184 aa). Active-site residues include Arg-151, Lys-175, His-245, Arg-248, and His-271. The active-site O-(3'-phospho-DNA)-tyrosine intermediate is the Tyr-280.

It belongs to the 'phage' integrase family. XerC subfamily. As to quaternary structure, forms a cyclic heterotetrameric complex composed of two molecules of XerC and two molecules of XerD.

The protein resides in the cytoplasm. Its function is as follows. Site-specific tyrosine recombinase, which acts by catalyzing the cutting and rejoining of the recombining DNA molecules. The XerC-XerD complex is essential to convert dimers of the bacterial chromosome into monomers to permit their segregation at cell division. It also contributes to the segregational stability of plasmids. The polypeptide is Tyrosine recombinase XerC (Alcanivorax borkumensis (strain ATCC 700651 / DSM 11573 / NCIMB 13689 / SK2)).